Reading from the N-terminus, the 241-residue chain is Thiamine import ATP-binding protein ThiQ (241 aa).

Positions 2 to 239 constitute an ABC transporter domain; the sequence is IQLDKLNHCY…PKDEVLIQYL (238 aa). ATP is bound at residue 41–48; that stretch reads GPSGAGKS.

This sequence belongs to the ABC transporter superfamily. Thiamine importer (TC 3.A.1.19.1) family. In terms of assembly, the complex is composed of two ATP-binding proteins (ThiQ), two transmembrane proteins (ThiP) and a solute-binding protein (ThiB).

Its subcellular location is the cell inner membrane. It catalyses the reaction thiamine(out) + ATP + H2O = thiamine(in) + ADP + phosphate + H(+). Part of the ABC transporter complex ThiBPQ involved in thiamine import. Responsible for energy coupling to the transport system. In Photobacterium profundum (strain SS9), this protein is Thiamine import ATP-binding protein ThiQ.